Reading from the N-terminus, the 279-residue chain is Pantothenate synthetase (279 aa).

26 to 33 is a binding site for ATP; it reads MGNLHEGH. Histidine 33 serves as the catalytic Proton donor. Position 57 (glutamine 57) interacts with (R)-pantoate. Glutamine 57 contributes to the beta-alanine binding site. Residue 144–147 coordinates ATP; it reads GKKD. Glutamine 150 contributes to the (R)-pantoate binding site. Residues valine 173 and 181–184 each bind ATP; that span reads LSSR.

Belongs to the pantothenate synthetase family. In terms of assembly, homodimer.

It is found in the cytoplasm. The catalysed reaction is (R)-pantoate + beta-alanine + ATP = (R)-pantothenate + AMP + diphosphate + H(+). It participates in cofactor biosynthesis; (R)-pantothenate biosynthesis; (R)-pantothenate from (R)-pantoate and beta-alanine: step 1/1. Its function is as follows. Catalyzes the condensation of pantoate with beta-alanine in an ATP-dependent reaction via a pantoyl-adenylate intermediate. The polypeptide is Pantothenate synthetase (Burkholderia cenocepacia (strain HI2424)).